We begin with the raw amino-acid sequence, 429 residues long: Serine hydroxymethyltransferase (429 aa).

Residues L128 and 132–134 (GHL) each bind (6S)-5,6,7,8-tetrahydrofolate. K237 bears the N6-(pyridoxal phosphate)lysine mark.

This sequence belongs to the SHMT family. In terms of assembly, homodimer. Pyridoxal 5'-phosphate serves as cofactor.

It is found in the cytoplasm. The enzyme catalyses (6R)-5,10-methylene-5,6,7,8-tetrahydrofolate + glycine + H2O = (6S)-5,6,7,8-tetrahydrofolate + L-serine. It functions in the pathway one-carbon metabolism; tetrahydrofolate interconversion. Its pathway is amino-acid biosynthesis; glycine biosynthesis; glycine from L-serine: step 1/1. Its function is as follows. Catalyzes the reversible interconversion of serine and glycine with tetrahydrofolate (THF) serving as the one-carbon carrier. This reaction serves as the major source of one-carbon groups required for the biosynthesis of purines, thymidylate, methionine, and other important biomolecules. Also exhibits THF-independent aldolase activity toward beta-hydroxyamino acids, producing glycine and aldehydes, via a retro-aldol mechanism. The chain is Serine hydroxymethyltransferase from Caulobacter vibrioides (strain ATCC 19089 / CIP 103742 / CB 15) (Caulobacter crescentus).